Consider the following 596-residue polypeptide: MTKAYNIIHHKFDVVVVGAGGAGLRSAFGMAKEGLNTACITKLFPTRSHTVAAQGGISAALGNMGEDDWRWHMYDTVKGSDWLGDQDAIEYMCKNAPDAILELEHYGVPFSRTEEGKIYQRPFGGMTTEYGKGKAAQRTCAAADRTGHAILHTLYQQSLKHKVQFFVEYFAIDLLMEDGECRGVVAWNLDDGSLHCFRAHNVVLATGGYGRAYFSATSAHTCTGDGGGMAIRAGLPLQDMEFVQFHPTGIYSAGCLITEGARGEGGYLVNANGERFMERYAPAAKDLASRDVVSRAMTIEIREGRGVGEHKDHVFLHLNHLSPEILHSRLPGISETAKIFAGVDVTKEPIPVLPTVHYNMGGIPTNYHGQVIIKDGKNHNSVVKGLMAIGEAACVSVHGANRLGSNSLLDLVVFGRSSALKAAELIKPASPHRSIKEESLEKIINRFDKVRHANGNILVAELRLKMQRTMQSHASVFRTQEVLDEGAGMISEIRSGYKDIKINDKSLIWNSDLVEALELDNLLDQALVTVYSAAARKESRGAHAREDYPDRNDEDWMKHTLSSIDEAGKVVLDYKPVTLTTLTDEVTAVPPVKRVY.

FAD is bound by residues 18–23, 41–56, and Asp-225; these read GAGGAG and TKLF…AQGG. His-49 carries the post-translational modification Tele-8alpha-FAD histidine. 2 residues coordinate substrate: His-246 and Thr-258. Arg-290 (proton acceptor) is an active-site residue. Residue His-357 participates in substrate binding. FAD is bound at residue Glu-391. A substrate-binding site is contributed by Arg-402. An FAD-binding site is contributed by 407-408; the sequence is SL.

It belongs to the FAD-dependent oxidoreductase 2 family. FRD/SDH subfamily. As to quaternary structure, part of an enzyme complex containing four subunits: a flavoprotein, an iron-sulfur, cytochrome b-556, and a hydrophobic anchor protein. It depends on FAD as a cofactor.

Its subcellular location is the cell inner membrane. The enzyme catalyses a quinone + succinate = fumarate + a quinol. Its pathway is carbohydrate metabolism; tricarboxylic acid cycle; fumarate from succinate (bacterial route): step 1/1. The polypeptide is Succinate dehydrogenase flavoprotein subunit (sdhA) (Rickettsia conorii (strain ATCC VR-613 / Malish 7)).